Consider the following 153-residue polypeptide: UPF0266 membrane protein SG1324 (153 aa).

The next 3 helical transmembrane spans lie at 6–26, 46–66, and 68–88; these read IGLV…EFIV, LDGL…ITTD, and KVMT…LAYI.

This sequence belongs to the UPF0266 family.

It localises to the cell inner membrane. This is UPF0266 membrane protein SG1324 from Sodalis glossinidius (strain morsitans).